The sequence spans 397 residues: MQKKTLSDITIQGKRVLMRVDFNVPLDEEKNITDDKRIVEALPSIKKIIENGGRLILMSHLGRPKGKPNQDFSLTPAAERLSELLDCPVIMAGDCIGTEVMQQVLALQDGEVIMLENLRFHPEEEANDPDFAKELASLGEIYVNDAFGTAHRAHASTEGITRYVQTAVAGYLIEKELMYLGKALQEPERPFVAILGGSKISGKIDVLENLFNKVDTVLIGGAMVFTFFKAQGLGTGNSLVEENKLELALSLIEQAARKNIKLLLPQDIIIAPEISADAESMAVAVNAIPDGMIGVDIGPETRAAYRQEILGARTVLWNGPMGVFEIDRFAEGTIAIAEAMADATAAGATTIIGGGDSAAAVAKAGLADQITHISTGGGASLEFLEGKELPGIAALND.

Residues 21 to 23, Arg-37, 60 to 63, Arg-119, and Arg-152 each bind substrate; these read DFN and HLGR. Residues Lys-203, Gly-294, Glu-325, and 354-357 each bind ATP; that span reads GGDS.

Belongs to the phosphoglycerate kinase family. Monomer.

It localises to the cytoplasm. It catalyses the reaction (2R)-3-phosphoglycerate + ATP = (2R)-3-phospho-glyceroyl phosphate + ADP. Its pathway is carbohydrate degradation; glycolysis; pyruvate from D-glyceraldehyde 3-phosphate: step 2/5. The protein is Phosphoglycerate kinase of Chlorobium limicola (strain DSM 245 / NBRC 103803 / 6330).